Here is a 364-residue protein sequence, read N- to C-terminus: Phosphoserine aminotransferase (364 aa).

Arg-42 lines the L-glutamate pocket. Pyridoxal 5'-phosphate is bound by residues Gly-76–Arg-77, Trp-102, Thr-156, Asp-175, and Gln-198. An N6-(pyridoxal phosphate)lysine modification is found at Lys-199. Position 240 to 241 (Asn-240 to Thr-241) interacts with pyridoxal 5'-phosphate.

Belongs to the class-V pyridoxal-phosphate-dependent aminotransferase family. SerC subfamily. Homodimer. The cofactor is pyridoxal 5'-phosphate.

Its subcellular location is the cytoplasm. It catalyses the reaction O-phospho-L-serine + 2-oxoglutarate = 3-phosphooxypyruvate + L-glutamate. The enzyme catalyses 4-(phosphooxy)-L-threonine + 2-oxoglutarate = (R)-3-hydroxy-2-oxo-4-phosphooxybutanoate + L-glutamate. Its pathway is amino-acid biosynthesis; L-serine biosynthesis; L-serine from 3-phospho-D-glycerate: step 2/3. The protein operates within cofactor biosynthesis; pyridoxine 5'-phosphate biosynthesis; pyridoxine 5'-phosphate from D-erythrose 4-phosphate: step 3/5. In terms of biological role, catalyzes the reversible conversion of 3-phosphohydroxypyruvate to phosphoserine and of 3-hydroxy-2-oxo-4-phosphonooxybutanoate to phosphohydroxythreonine. This chain is Phosphoserine aminotransferase, found in Shewanella woodyi (strain ATCC 51908 / MS32).